A 281-amino-acid chain; its full sequence is INSIG family protein (281 aa).

Topologically, residues 1-93 (MSRKEIYEPR…FIDYSSLITF (93 aa)) are cytoplasmic. The residue at position 28 (S28) is a Phosphoserine. The chain crosses the membrane as a helical span at residues 94-120 (FCKLCVIFGLGFVFTYLAEQIVQDAKL). Topologically, residues 121–134 (PLLTVNLKSWKFEP) are lumenal. A helical membrane pass occupies residues 135–159 (PWPAIFGFVAVILGLSYRRMDTKYP). The Cytoplasmic portion of the chain corresponds to 160–170 (LGAAPLRPSQS). A helical membrane pass occupies residues 171–186 (SKWQWISRYLAAFATL). Over 187-189 (LLS) the chain is Lumenal. Residues 190 to 215 (MKKLLFISNSHSIVALVASSASIWYI) traverse the membrane as a helical segment. The Cytoplasmic segment spans residues 216-221 (FDRSRN). A helical transmembrane segment spans residues 222 to 256 (GIILSTITSVLGSILYYNLVDTSKIELNGVEFPEI). Residues 257-260 (QFRL) lie on the Lumenal side of the membrane. The chain crosses the membrane as a helical span at residues 261–281 (WIPMILFSASTIVGNAGRLLF).

The protein belongs to the INSIG family.

The protein localises to the endoplasmic reticulum membrane. This Schizosaccharomyces pombe (strain 972 / ATCC 24843) (Fission yeast) protein is INSIG family protein (ins1).